The chain runs to 219 residues: Large ribosomal subunit protein uL3 (219 aa).

The interval 133–153 (GRASHGNSRSHNVPGSIGMAQ) is disordered. Gln-153 carries the post-translational modification N5-methylglutamine.

This sequence belongs to the universal ribosomal protein uL3 family. In terms of assembly, part of the 50S ribosomal subunit. Forms a cluster with proteins L14 and L19. Methylated by PrmB.

One of the primary rRNA binding proteins, it binds directly near the 3'-end of the 23S rRNA, where it nucleates assembly of the 50S subunit. This Burkholderia thailandensis (strain ATCC 700388 / DSM 13276 / CCUG 48851 / CIP 106301 / E264) protein is Large ribosomal subunit protein uL3.